Here is a 102-residue protein sequence, read N- to C-terminus: NADH-quinone oxidoreductase subunit K (102 aa).

3 helical membrane passes run 6–26, 30–50, and 62–82; these read LEHG…GLMV, ILFV…AFIV, and VMFI…LAIL.

Belongs to the complex I subunit 4L family. As to quaternary structure, NDH-1 is composed of 13 different subunits. Subunits NuoA, H, J, K, L, M, N constitute the membrane sector of the complex.

It is found in the cell inner membrane. It carries out the reaction a quinone + NADH + 5 H(+)(in) = a quinol + NAD(+) + 4 H(+)(out). Its function is as follows. NDH-1 shuttles electrons from NADH, via FMN and iron-sulfur (Fe-S) centers, to quinones in the respiratory chain. The immediate electron acceptor for the enzyme in this species is believed to be ubiquinone. Couples the redox reaction to proton translocation (for every two electrons transferred, four hydrogen ions are translocated across the cytoplasmic membrane), and thus conserves the redox energy in a proton gradient. The sequence is that of NADH-quinone oxidoreductase subunit K from Pseudomonas fluorescens (strain SBW25).